Consider the following 395-residue polypeptide: ATP phosphoribosyltransferase regulatory subunit (395 aa).

This sequence belongs to the class-II aminoacyl-tRNA synthetase family. HisZ subfamily. In terms of assembly, heteromultimer composed of HisG and HisZ subunits.

It localises to the cytoplasm. It functions in the pathway amino-acid biosynthesis; L-histidine biosynthesis; L-histidine from 5-phospho-alpha-D-ribose 1-diphosphate: step 1/9. Required for the first step of histidine biosynthesis. May allow the feedback regulation of ATP phosphoribosyltransferase activity by histidine. The sequence is that of ATP phosphoribosyltransferase regulatory subunit from Pseudomonas savastanoi pv. phaseolicola (strain 1448A / Race 6) (Pseudomonas syringae pv. phaseolicola (strain 1448A / Race 6)).